The chain runs to 337 residues: Anthranilate phosphoribosyltransferase (337 aa).

5-phospho-alpha-D-ribose 1-diphosphate-binding positions include G82, 85–86 (GD), T90, 92–95 (NIST), 110–118 (KHGGRSVSS), and S122. G82 contributes to the anthranilate binding site. Residue S94 coordinates Mg(2+). R168 lines the anthranilate pocket. Mg(2+)-binding residues include D226 and E227.

The protein belongs to the anthranilate phosphoribosyltransferase family. In terms of assembly, homodimer. Requires Mg(2+) as cofactor.

The catalysed reaction is N-(5-phospho-beta-D-ribosyl)anthranilate + diphosphate = 5-phospho-alpha-D-ribose 1-diphosphate + anthranilate. It participates in amino-acid biosynthesis; L-tryptophan biosynthesis; L-tryptophan from chorismate: step 2/5. Catalyzes the transfer of the phosphoribosyl group of 5-phosphorylribose-1-pyrophosphate (PRPP) to anthranilate to yield N-(5'-phosphoribosyl)-anthranilate (PRA). The protein is Anthranilate phosphoribosyltransferase of Francisella tularensis subsp. mediasiatica (strain FSC147).